The chain runs to 438 residues: UDP-N-acetylmuramoylalanine--D-glutamate ligase (438 aa).

Residue 112-118 (GSNGKST) participates in ATP binding.

The protein belongs to the MurCDEF family.

It localises to the cytoplasm. It catalyses the reaction UDP-N-acetyl-alpha-D-muramoyl-L-alanine + D-glutamate + ATP = UDP-N-acetyl-alpha-D-muramoyl-L-alanyl-D-glutamate + ADP + phosphate + H(+). Its pathway is cell wall biogenesis; peptidoglycan biosynthesis. Its function is as follows. Cell wall formation. Catalyzes the addition of glutamate to the nucleotide precursor UDP-N-acetylmuramoyl-L-alanine (UMA). The polypeptide is UDP-N-acetylmuramoylalanine--D-glutamate ligase (Shigella boydii serotype 4 (strain Sb227)).